We begin with the raw amino-acid sequence, 315 residues long: Ribosomal RNA small subunit methyltransferase H (315 aa).

S-adenosyl-L-methionine-binding positions include 61–63 (GGH), Asp-80, Phe-108, Asp-124, and Gln-131. The segment at 291–315 (PQPEEEEKNPRSRSAKLRFAQRKPL) is disordered. A compositionally biased stretch (basic residues) spans 301-315 (RSRSAKLRFAQRKPL).

This sequence belongs to the methyltransferase superfamily. RsmH family.

The protein localises to the cytoplasm. The catalysed reaction is cytidine(1402) in 16S rRNA + S-adenosyl-L-methionine = N(4)-methylcytidine(1402) in 16S rRNA + S-adenosyl-L-homocysteine + H(+). Specifically methylates the N4 position of cytidine in position 1402 (C1402) of 16S rRNA. The protein is Ribosomal RNA small subunit methyltransferase H of Crocosphaera subtropica (strain ATCC 51142 / BH68) (Cyanothece sp. (strain ATCC 51142)).